The primary structure comprises 131 residues: Profilin-4 (131 aa).

The protein belongs to the profilin family. In terms of assembly, occurs in many kinds of cells as a complex with monomeric actin in a 1:1 ratio.

It localises to the cytoplasm. Its subcellular location is the cytoskeleton. Its function is as follows. Binds to actin and affects the structure of the cytoskeleton. At high concentrations, profilin prevents the polymerization of actin, whereas it enhances it at low concentrations. By binding to PIP2, it inhibits the formation of IP3 and DG. The polypeptide is Profilin-4 (Hevea brasiliensis (Para rubber tree)).